Here is a 151-residue protein sequence, read N- to C-terminus: UPF0178 protein YaiI (151 aa).

The protein belongs to the UPF0178 family.

This is UPF0178 protein YaiI from Salmonella paratyphi B (strain ATCC BAA-1250 / SPB7).